Here is a 186-residue protein sequence, read N- to C-terminus: HTH-type transcriptional regulator Hpr (186 aa).

Positions 13 to 157 (AMLYSQRIAQ…VMAVIRNIYG (145 aa)) constitute an HTH marR-type domain. A DNA-binding region (H-T-H motif) is located at residues 63–86 (ISDVAKFGVMHVSTAFNFSKKLEE).

As to quaternary structure, homodimer.

Functionally, negative regulator of protease production and sporulation. This Lysinibacillus sphaericus (strain C3-41) protein is HTH-type transcriptional regulator Hpr.